Consider the following 289-residue polypeptide: Vesicular-fusion protein SEC17 (289 aa).

The protein belongs to the SNAP family.

It is found in the membrane. Required for vesicular transport between the endoplasmic reticulum and the Golgi apparatus. In Coprinopsis cinerea (strain Okayama-7 / 130 / ATCC MYA-4618 / FGSC 9003) (Inky cap fungus), this protein is Vesicular-fusion protein SEC17 (SEC17).